A 532-amino-acid chain; its full sequence is Probable cytochrome P450 524A1 (532 aa).

The helical transmembrane segment at Phe-8–Val-28 threads the bilayer. Cys-478 contacts heme.

This sequence belongs to the cytochrome P450 family. Requires heme as cofactor.

The protein resides in the membrane. The sequence is that of Probable cytochrome P450 524A1 (cyp524A1) from Dictyostelium discoideum (Social amoeba).